Consider the following 382-residue polypeptide: Sialidase (382 aa).

Substrate is bound at residue Arg-37. The active-site Proton acceptor is the Asp-62. BNR repeat units lie at residues 71 to 82, 140 to 151, and 208 to 219; these read ARSTDFGKTWSY, IYSDDNGLTWSN, and IYSKDNGETWTM. Residue Arg-245 coordinates substrate. The BNR 4 repeat unit spans residues 255–266; the sequence is YISHDLGTTWEI. The active-site Nucleophile is the Tyr-347.

This sequence belongs to the glycosyl hydrolase 33 family.

Its subcellular location is the secreted. It catalyses the reaction Hydrolysis of alpha-(2-&gt;3)-, alpha-(2-&gt;6)-, alpha-(2-&gt;8)- glycosidic linkages of terminal sialic acid residues in oligosaccharides, glycoproteins, glycolipids, colominic acid and synthetic substrates.. Functionally, sialidases have been suggested to be pathogenic factors in microbial infections. This Clostridium perfringens protein is Sialidase (nanH).